The following is a 482-amino-acid chain: FAD-linked oxidoreductase alt4 (482 aa).

The 159-residue stretch at 53-211 (ERPTYLAIVD…LEATFQVYPQ (159 aa)) folds into the FAD-binding PCMH-type domain.

It belongs to the oxygen-dependent FAD-linked oxidoreductase family. It depends on FAD as a cofactor.

Its pathway is secondary metabolite biosynthesis. In terms of biological role, FAD-linked oxidoreductase; part of the gene cluster that mediates the biosynthesis of alternapyrone derivatives. Alternapyrone is a decaketide with octa-methylation from methionine on every C2 unit except the third unit. All the domains in the polyketide synthase alt5 are apparently involved in alternapyrone synthesis, that is, the 8 CMeT, 7 KR, 7 DH, and 4 ER reactions in the 9 KS-mediated condensation steps required for alternapyrone synthesis. the alternapyrone produced by alt5 might be intensively modified by cytochrome P450 monooxygenases alt1, alt2 and alt3 and FAD-dependent oxidoreductase alt4 present in the alt gene cluster. The chain is FAD-linked oxidoreductase alt4 from Alternaria solani.